We begin with the raw amino-acid sequence, 1032 residues long: Kinesin heavy chain isoform 5A (1032 aa).

An N-acetylalanine modification is found at Ala-2. One can recognise a Kinesin motor domain in the interval 9-327 (SIKVLCRFRP…LMFGQRAKTI (319 aa)). 86-93 (GQTSSGKT) is an ATP binding site. Residues 174–315 (VSSPEEILDV…PSSYNDAETK (142 aa)) form a microtubule-binding region. The segment at 271-361 (EGTKSYVPYR…KTKAQKETIA (91 aa)) is necessary for interaction with ZFYVE27. Residues 331–906 (ASVNLELTAE…VDRIKEAVRY (576 aa)) are a coiled coil. The interaction with BICD2 stretch occupies residues 353 to 1032 (TKAQKETIAK…FPLHQETAAS (680 aa)). Thr-397 is modified (phosphothreonine). Disordered stretches follow at residues 906–939 (YKSSGKRGHSAQIAKPVRPGHYPASSPTNPYGTR) and 978–1010 (SGATSSGGPLASYQKANMDNGNATDINDNRSDL). The interval 907–1032 (KSSGKRGHSA…FPLHQETAAS (126 aa)) is globular. Residues 978-989 (SGATSSGGPLAS) show a composition bias toward low complexity. Over residues 991 to 1003 (QKANMDNGNATDI) the composition is skewed to polar residues.

The protein belongs to the TRAFAC class myosin-kinesin ATPase superfamily. Kinesin family. Kinesin subfamily. Oligomer composed of two heavy chains and two light chains. Interacts with GRIP1. Interacts with FMR1 (via C-terminus); this interaction is increased in a mGluR-dependent manner. Interacts with ZFYVE27. Interacts with VAPA, VAPB, SURF4, RAB11A (GDP-bound form), RAB11B (GDP-bound form) and RTN3 in a ZFYVE27-dependent manner. Interacts with BORCS5. Interacts with BICD2. Interacts with DTNB. In terms of tissue distribution, distributed throughout the CNS but is highly enriched in subsets of neurons.

It is found in the cytoplasm. It localises to the perinuclear region. Its subcellular location is the cytoskeleton. The protein resides in the perikaryon. It carries out the reaction ATP + H2O + a kinesin associated with a microtubule at position (n) = ADP + phosphate a kinesin associated with a microtubule at position (n+1, toward the plus end).. Its function is as follows. Microtubule-dependent motor required for slow axonal transport of neurofilament proteins (NFH, NFM and NFL). Can induce formation of neurite-like membrane protrusions in non-neuronal cells in a ZFYVE27-dependent manner. The ZFYVE27-KIF5A complex contributes to the vesicular transport of VAPA, VAPB, SURF4, RAB11A, RAB11B and RTN3 proteins in neurons. Required for anterograde axonal transportation of MAPK8IP3/JIP3 which is essential for MAPK8IP3/JIP3 function in axon elongation. The sequence is that of Kinesin heavy chain isoform 5A from Homo sapiens (Human).